Here is a 447-residue protein sequence, read N- to C-terminus: Trimethylamine monooxygenase (447 aa).

FAD is bound by residues Ser-13, Glu-38, Gln-40, Leu-46, Trp-47, and His-63. Residues Trp-71 and Asn-73 each coordinate NADP(+). The FAD site is built by Asn-73 and Val-126. Residues Tyr-173, Ala-205, Ser-206, Ser-208, and Arg-229 each coordinate NADP(+). Positions 318 and 321 each coordinate FAD. NADP(+) is bound at residue Arg-413.

This sequence belongs to the FMO family. It depends on FAD as a cofactor.

The catalysed reaction is trimethylamine + NADPH + O2 = trimethylamine N-oxide + NADP(+) + H2O. Its function is as follows. Catalyzes the oxidation of trimethylamine (TMA) to produce trimethylamine N-oxide (TMAO). TMA is the best substrate, but the enzyme can also oxidize methimazole, indole and dimethylamine (DMA). The protein is Trimethylamine monooxygenase of Roseovarius nubinhibens (strain ATCC BAA-591 / DSM 15170 / ISM).